A 109-amino-acid chain; its full sequence is Iron-sulfur cluster assembly protein CyaY (109 aa).

It belongs to the frataxin family.

Involved in iron-sulfur (Fe-S) cluster assembly. May act as a regulator of Fe-S biogenesis. The protein is Iron-sulfur cluster assembly protein CyaY of Bordetella avium (strain 197N).